The primary structure comprises 572 residues: Phosphoglucomutase-2 (572 aa).

Residues T23, R27, 126 to 127 (SH), and K140 contribute to the substrate site. The active-site Phosphoserine intermediate is the S126. A Mg(2+)-binding site is contributed by S126. Residues D308, D310, and D312 each coordinate Mg(2+). Substrate contacts are provided by residues 312 to 313 (DR), T373, 392 to 394 (EES), K405, and R527.

It belongs to the phosphohexose mutase family. Requires Mg(2+) as cofactor. Phosphorylated via a calcium-dependent protein kinase.

The protein localises to the cytoplasm. The enzyme catalyses alpha-D-glucose 1-phosphate = alpha-D-glucose 6-phosphate. May be involved in membrane fusion in exocytosis. The sequence is that of Phosphoglucomutase-2 (pp63-2) from Paramecium tetraurelia.